The primary structure comprises 502 residues: Probable cytochrome P450 313b1 (502 aa).

Cys-449 is a heme binding site.

The protein belongs to the cytochrome P450 family. It depends on heme as a cofactor.

The protein localises to the endoplasmic reticulum membrane. Its subcellular location is the microsome membrane. Its function is as follows. May be involved in the metabolism of insect hormones and in the breakdown of synthetic insecticides. The polypeptide is Probable cytochrome P450 313b1 (Cyp313b1) (Drosophila melanogaster (Fruit fly)).